Here is a 320-residue protein sequence, read N- to C-terminus: Olfactory receptor 13C8 (320 aa).

Residues 1–25 (MERTNDSTSTEFFLVGLSAHPKLQT) are Extracellular-facing. A glycan (N-linked (GlcNAc...) asparagine) is linked at asparagine 5. Residues 26–46 (VFFVLILWMYLMILLGNGVLI) traverse the membrane as a helical segment. Residues 47–54 (SVIIFDSH) are Cytoplasmic-facing. Residues 55–75 (LHTPMYFFLCNLSFLDVCYTS) form a helical membrane-spanning segment. Residues 76–99 (SSVPLILASFLAVKKKVSFSGCMV) are Extracellular-facing. Cysteine 97 and cysteine 189 are disulfide-bonded. Residues 100 to 120 (QMFISFAMGATECMILGTMAL) traverse the membrane as a helical segment. Over 121-139 (DRYVAICYPLRYPVIMSKG) the chain is Cytoplasmic. The helical transmembrane segment at 140-160 (AYVAMAAGSWVTGLVDSVVQT) threads the bilayer. Topologically, residues 161–197 (AFAMQLPFCANNVIKHFVCEILAILKLACADISINVI) are extracellular. Residues 198 to 217 (SMTGSNLIVLVIPLLVISIS) form a helical membrane-spanning segment. Over 218–237 (YIFIVATILRIPSTEGKHKA) the chain is Cytoplasmic. A helical transmembrane segment spans residues 238–258 (FSTCSAHLTVVIIFYGTIFFM). The Extracellular portion of the chain corresponds to 259–277 (YAKPESKASVDSGNEDIIE). Residues 278-298 (ALISLFYGVMTPMLNPLIYSL) form a helical membrane-spanning segment. The Cytoplasmic segment spans residues 299-320 (RNKDVKAAVKNILCRKNFSDGK).

It belongs to the G-protein coupled receptor 1 family.

The protein localises to the cell membrane. In terms of biological role, odorant receptor. In Homo sapiens (Human), this protein is Olfactory receptor 13C8 (OR13C8).